Consider the following 416-residue polypeptide: Ferrochelatase, mitochondrial (416 aa).

A mitochondrion-targeting transit peptide spans 1–47 (MAAALRSAGVLLRDRLLYGGSRACQPRRCQSGAATAAAATETAQRAR). Residues 41 to 62 (ETAQRARSPKPQAQPGNRKPRT) form a disordered region. K50 is modified (N6-acetyllysine). 3 residues coordinate protoporphyrin IX: R108, Y116, and S123. N6-succinyllysine is present on K131. Residue C189 participates in [2Fe-2S] cluster binding. H223 is a catalytic residue. An N6-acetyllysine; alternate modification is found at K283. K283 is modified (N6-succinyllysine; alternate). D376 is a catalytic residue. Positions 396, 399, and 404 each coordinate [2Fe-2S] cluster. K408 carries the N6-acetyllysine; alternate modification. An N6-succinyllysine; alternate modification is found at K408.

The protein belongs to the ferrochelatase family. In terms of assembly, homodimer. Homotetramer. Interaction with PGRMC1; the interaction results in decreased FECH activity. Interacts with ABCB10 and SLC25A37; this interaction forms an oligomeric complex. Forms a complex with ABCB7 and ABCB10, where a dimeric FECH bridges ABCB7 and ABCB10 homodimers; this complex may be required for cellular iron homeostasis, mitochondrial function and heme biosynthesis. Interacts with ABCB7 and ABCB10. It depends on [2Fe-2S] cluster as a cofactor.

The protein localises to the mitochondrion inner membrane. The enzyme catalyses heme b + 2 H(+) = protoporphyrin IX + Fe(2+). Its pathway is porphyrin-containing compound metabolism; protoheme biosynthesis; protoheme from protoporphyrin-IX: step 1/1. Functionally, catalyzes the ferrous insertion into protoporphyrin IX and participates in the terminal step in the heme biosynthetic pathway. The polypeptide is Ferrochelatase, mitochondrial (Bos taurus (Bovine)).